The following is a 1925-amino-acid chain: Cilia- and flagella-associated protein 65 (1925 aa).

A helical membrane pass occupies residues 188 to 208; sequence FFTVIPQPIFLSPGITLTLPI. An MSP domain is found at 877–986; that stretch reads QLKLDTHKSL…THYMLRLVGV (110 aa). Residues 1525–1550 adopt a coiled-coil conformation; the sequence is SQQLMRQYHKELQEWKDEKVRQEVEF. Disordered regions lie at residues 1645 to 1667 and 1736 to 1823; these read KRKA…WGPV and SSWE…PESQ. Basic and acidic residues-rich tracts occupy residues 1649-1661 and 1739-1762; these read PREE…EKSP and EDGK…KKEE. The segment covering 1763–1804 has biased composition (acidic residues); sequence GEEEKGEEEEEELEEEEEEEEETEEEELGKEEIEEKEEERDE.

It belongs to the CFAP65 family. As to quaternary structure, interacts with CFAP47.

The protein localises to the cell projection. It localises to the cilium. The protein resides in the flagellum membrane. Its subcellular location is the cytoplasmic vesicle. It is found in the secretory vesicle. The protein localises to the acrosome membrane. It localises to the cytoplasm. Functionally, plays a role in flagellar formation and sperm motility. The sequence is that of Cilia- and flagella-associated protein 65 from Homo sapiens (Human).